Here is a 77-residue protein sequence, read N- to C-terminus: Protein RALF-like 17 (77 aa).

A signal peptide spans 1–29 (MAASREFIICCFLTLLLCNFFMRVESGAA). A disulfide bridge connects residues Cys37 and Cys51.

The protein belongs to the plant rapid alkalinization factor (RALF) family.

The protein resides in the secreted. Cell signaling peptide that may regulate plant stress, growth, and development. Mediates a rapid alkalinization of extracellular space by mediating a transient increase in the cytoplasmic Ca(2+) concentration leading to a calcium-dependent signaling events through a cell surface receptor and a concomitant activation of some intracellular mitogen-activated protein kinases. This is Protein RALF-like 17 (RALFL17) from Arabidopsis thaliana (Mouse-ear cress).